The primary structure comprises 287 residues: Homoserine kinase (287 aa).

An ATP-binding site is contributed by 78–88 (PLSRGLGSSST).

This sequence belongs to the GHMP kinase family. Homoserine kinase subfamily.

The protein resides in the cytoplasm. It carries out the reaction L-homoserine + ATP = O-phospho-L-homoserine + ADP + H(+). The protein operates within amino-acid biosynthesis; L-threonine biosynthesis; L-threonine from L-aspartate: step 4/5. Catalyzes the ATP-dependent phosphorylation of L-homoserine to L-homoserine phosphate. The polypeptide is Homoserine kinase (Lactobacillus gasseri (strain ATCC 33323 / DSM 20243 / BCRC 14619 / CIP 102991 / JCM 1131 / KCTC 3163 / NCIMB 11718 / NCTC 13722 / AM63)).